The following is a 114-amino-acid chain: Phosphoribosyl-AMP cyclohydrolase (114 aa).

A Mg(2+)-binding site is contributed by Asp76. Cys77 contributes to the Zn(2+) binding site. Mg(2+) is bound by residues Asp78 and Asp80. Positions 93 and 100 each coordinate Zn(2+).

This sequence belongs to the PRA-CH family. In terms of assembly, homodimer. The cofactor is Mg(2+). Requires Zn(2+) as cofactor.

Its subcellular location is the cytoplasm. The enzyme catalyses 1-(5-phospho-beta-D-ribosyl)-5'-AMP + H2O = 1-(5-phospho-beta-D-ribosyl)-5-[(5-phospho-beta-D-ribosylamino)methylideneamino]imidazole-4-carboxamide. It participates in amino-acid biosynthesis; L-histidine biosynthesis; L-histidine from 5-phospho-alpha-D-ribose 1-diphosphate: step 3/9. Catalyzes the hydrolysis of the adenine ring of phosphoribosyl-AMP. The chain is Phosphoribosyl-AMP cyclohydrolase from Streptococcus sanguinis (strain SK36).